A 95-amino-acid polypeptide reads, in one-letter code: Large ribosomal subunit protein uL23 (95 aa).

The protein belongs to the universal ribosomal protein uL23 family. Part of the 50S ribosomal subunit. Contacts protein L29, and trigger factor when it is bound to the ribosome.

One of the early assembly proteins it binds 23S rRNA. One of the proteins that surrounds the polypeptide exit tunnel on the outside of the ribosome. Forms the main docking site for trigger factor binding to the ribosome. This Pelotomaculum thermopropionicum (strain DSM 13744 / JCM 10971 / SI) protein is Large ribosomal subunit protein uL23.